A 295-amino-acid chain; its full sequence is Nucleotide-binding protein llmg_1557 (295 aa).

12 to 19 provides a ligand contact to ATP; it reads GMSGAGKT. A GTP-binding site is contributed by 63–66; sequence DMRS.

Belongs to the RapZ-like family.

Functionally, displays ATPase and GTPase activities. This Lactococcus lactis subsp. cremoris (strain MG1363) protein is Nucleotide-binding protein llmg_1557.